Reading from the N-terminus, the 144-residue chain is MCHAREASPGTGEPEAAPRDNFPRAAGSKRGVGAAFETRAQRFLERAGLALVARNVTVRGGEIDLVMRERDGTLVFVEVRARANSRYGGAAASIGARKRMRLLLAAHAFWARTGGANACRFDVVAFEGSRLVWLRDAFRADDAG.

Positions 1 to 28 (MCHAREASPGTGEPEAAPRDNFPRAAGS) are disordered.

It belongs to the UPF0102 family.

The chain is UPF0102 protein BURPS1106A_3900 from Burkholderia pseudomallei (strain 1106a).